A 93-amino-acid chain; its full sequence is CRISPR-associated endoribonuclease Cas2 (93 aa).

Asp-13 is a binding site for Mg(2+).

This sequence belongs to the CRISPR-associated endoribonuclease Cas2 protein family. As to quaternary structure, homodimer, forms a heterotetramer with a Cas1 homodimer. Mg(2+) serves as cofactor.

Functionally, CRISPR (clustered regularly interspaced short palindromic repeat), is an adaptive immune system that provides protection against mobile genetic elements (viruses, transposable elements and conjugative plasmids). CRISPR clusters contain sequences complementary to antecedent mobile elements and target invading nucleic acids. CRISPR clusters are transcribed and processed into CRISPR RNA (crRNA). Functions as a ssRNA-specific endoribonuclease. Involved in the integration of spacer DNA into the CRISPR cassette. This is CRISPR-associated endoribonuclease Cas2 from Korarchaeum cryptofilum (strain OPF8).